Here is a 353-residue protein sequence, read N- to C-terminus: BLOC-1-related complex subunit 6 (353 aa).

Residues 23-194 (AIFGDGPGQT…SGAGGGRRAT (172 aa)) are disordered. Over residues 102 to 126 (FDLHGSSRRKDPEPPEAKPESERVC) the composition is skewed to basic and acidic residues. Ser130 and Ser166 each carry phosphoserine. Residues 172-191 (GACGGPASSGGAESGAGGGR) are compositionally biased toward gly residues. Thr194 carries the phosphothreonine modification. Ser197 is modified (phosphoserine). Residues 225 to 253 (LSGAPQPPPPAPTRPCSAPTPTPAIPPID) form a disordered region. Positions 229–253 (PQPPPPAPTRPCSAPTPTPAIPPID) are enriched in pro residues.

Belongs to the BORCS6 family. As to quaternary structure, component of the BLOC-one-related complex (BORC) which is composed of BLOC1S1, BLOC1S2, BORCS5, BORCS6, BORCS7, BORCS8, KXD1 and SNAPIN.

The protein resides in the lysosome membrane. As part of the BORC complex may play a role in lysosomes movement and localization at the cell periphery. Associated with the cytosolic face of lysosomes, the BORC complex may recruit ARL8B and couple lysosomes to microtubule plus-end-directed kinesin motor. This is BLOC-1-related complex subunit 6 from Bos taurus (Bovine).